We begin with the raw amino-acid sequence, 430 residues long: MNVKVENIEKNVVKLEITVDSEKFNEAVKKSFKKNAKRFNVPGFRKGKAPLNIIKKYYGEGVLFEDAINFCCEDTYPKAIEENNIKPVDYPQIDVVQIGEGKDFIYTAEVTTVPEVKLGEYKGVEVKKVSYEVEDEAVENELKSMQEKNARVFLKEEGEIEKGNIAIIDFKGYVDGKAFEGGEAKDYEIEIGSGTFIGDFEDQLVGLKKDESKEVNVSFPEEYGREDLNGKPATFEVTIKDIKVKELPALDDEFAKEVSEFDTLEELKSDIKDRMKKELSEKAKAEYEEAVVEAVGANAEIEIPKVMIEKEIENMVRDLEMRLKYQGLDLKSYYEFTNSSEEKVKEYMRETAEKRVKTDLIMQEIAKVEDIKATEEELKEKAMEVAKQYGQKDVEKTAELIANAQKSYLEIDIVNGKVLDLLVENSKEIA.

The region spanning 163-248 (GNIAIIDFKG…IKDIKVKELP (86 aa)) is the PPIase FKBP-type domain.

This sequence belongs to the FKBP-type PPIase family. Tig subfamily.

It is found in the cytoplasm. The enzyme catalyses [protein]-peptidylproline (omega=180) = [protein]-peptidylproline (omega=0). Involved in protein export. Acts as a chaperone by maintaining the newly synthesized protein in an open conformation. Functions as a peptidyl-prolyl cis-trans isomerase. This Clostridium botulinum (strain Loch Maree / Type A3) protein is Trigger factor.